We begin with the raw amino-acid sequence, 66 residues long: Defensin-B1 (66 aa).

Positions 1 to 23 are cleaved as a signal peptide; the sequence is MNAHVLLLCTILFLLVHTPPVLG. 3 disulfides stabilise this stretch: Cys29-Cys56, Cys36-Cys50, and Cys40-Cys57. Residues 61–66 constitute a propeptide that is removed on maturation; sequence VLMEDG.

The protein belongs to the beta-defensin family. In terms of tissue distribution, expressed at low levels in kidney, lung, and spleen.

The protein resides in the secreted. Has bactericidal activity. May act as a ligand for C-C chemokine receptor CCR6. Positively regulates the sperm motility and bactericidal activity in a CCR6-dependent manner. Binds to CCR6 and triggers Ca2+ mobilization in the sperm which is important for its motility. The polypeptide is Defensin-B1 (Ornithorhynchus anatinus (Duckbill platypus)).